The primary structure comprises 159 residues: Cyclic pyranopterin monophosphate synthase (159 aa).

Substrate-binding positions include 75–77 (LCH) and 113–114 (ME). The active site involves aspartate 128.

The protein belongs to the MoaC family. Homohexamer; trimer of dimers.

It catalyses the reaction (8S)-3',8-cyclo-7,8-dihydroguanosine 5'-triphosphate = cyclic pyranopterin phosphate + diphosphate. It participates in cofactor biosynthesis; molybdopterin biosynthesis. In terms of biological role, catalyzes the conversion of (8S)-3',8-cyclo-7,8-dihydroguanosine 5'-triphosphate to cyclic pyranopterin monophosphate (cPMP). The polypeptide is Cyclic pyranopterin monophosphate synthase (Aliivibrio fischeri (strain MJ11) (Vibrio fischeri)).